The primary structure comprises 523 residues: Sucrose 6(F)-phosphate phosphorylase (523 aa).

Residues D58, H96, R221–D223, E264, H326–D327, and K434 each bind sucrose 6(F)-phosphate. The Nucleophile role is filled by D223. Catalysis depends on E264, which acts as the Proton donor/acceptor.

Belongs to the glycosyl hydrolase 13 family. Sucrose phosphorylase subfamily. Monomer.

The catalysed reaction is sucrose 6(F)-phosphate + phosphate = beta-D-fructose 6-phosphate + alpha-D-glucose 1-phosphate. Its function is as follows. Catalyzes the reversible phosphorolysis of sucrose 6(F)-phosphate into alpha-D-glucose 1-phosphate (Glc1P) and D-fructose 6-phosphate. May be involved in a new pathway for the degradation of sucrose, which could become phosphorylated on its fructose moiety during uptake via a PTS system. Shows strict specificity since it does not catalyze reactions with alternative substrates. In Ilumatobacter coccineus (strain NBRC 103263 / KCTC 29153 / YM16-304), this protein is Sucrose 6(F)-phosphate phosphorylase.